A 691-amino-acid chain; its full sequence is MASLPLCRSPSSLLPSWPHRPISASFNPKNPSSPVAAHVSVQETPPQPQDPSPPSDSNPNGTRPSSSSNTRFLWVNPNSPRAADVARARAGSGRRARLASAAAALGACETTESAVEAALQAAFPEPPSEQDAVIVLNTAAATRAETAVLALRWFLGNAKVRKKVILYNVVLKLLRKKRLWSETEALWAEMLRDGVQPDNATFSTVISCARACGLHSKAVEWFDKMPEFGCSPDMLTYSAVIDAYGHAGNSEAALRLYDRARAEKWQLDPVICSTVIKVHSTSGNFDGALNVFEEMKAIGVRPNLVVYNTMLDAMGRALRPWVVKTIHREMVDQQVQPSRATYCCLLHAYTRARYGEDAMAVYRLMKDEAMGIDVMLYNMLLSMCADIGYVDEAEEIFRDMKASMGAHSKPDSWSYSSMVTLYSSTANVLSAEGILNEMVEAGFKPNIFVLTSLIRCYGKVGRTDDVVRSFGMLQDLGIIPDDRFCGCLLSVAANTPAEELGKVISCIERSNVQLGAVVKLLVDRSSSESFREAARELLRSSRGVVKMPYCNCLMDLCVNLNQMEKACALLDAAQQLGIYANIQTRTQTQWSLHLRGLSVGAALTTLHVWMNDLYTSLQTGNEGLPPLLGIHTGQGKNTYSDRGLAAMFEAHLKELDAPFHEAPDKAGWFLTTNVAAKQWLESKAASELVTV.

Low complexity predominate over residues 1–17 (MASLPLCRSPSSLLPSW). A chloroplast-targeting transit peptide spans 1–35 (MASLPLCRSPSSLLPSWPHRPISASFNPKNPSSPV). The disordered stretch occupies residues 1–76 (MASLPLCRSP…SSNTRFLWVN (76 aa)). The segment covering 24-33 (ASFNPKNPSS) has biased composition (polar residues). Pro residues predominate over residues 45 to 56 (PPQPQDPSPPSD). Polar residues predominate over residues 61 to 76 (GTRPSSSSNTRFLWVN). PPR repeat units lie at residues 163 to 197 (KVIL…GVQP), 198 to 232 (DNAT…GCSP), 233 to 267 (DMLT…KWQL), 268 to 302 (DPVI…GVRP), 303 to 337 (NLVV…QVQP), 338 to 372 (SRAT…AMGI), 373 to 403 (DVML…MKAS), 411 to 445 (DSWS…GFKP), 446 to 480 (NIFV…GIIP), and 546 to 580 (KMPY…GIYA). A Smr domain is found at 592–677 (LHLRGLSVGA…WFLTTNVAAK (86 aa)).

This sequence belongs to the PPR family. P subfamily.

It localises to the plastid. Its subcellular location is the chloroplast stroma. Involved in translation and accumulation of chloroplast ATP synthase subunits. Interacts with the 5'-UTR of the chloroplast bicistronic atpB and atpE mRNA and activates its translation by facilitating ribosome association with the mRNA. Required for accumulation and activity of the chloroplast ATP synthase. Enhances atpA translation and is required for accumulation of specific processed atpF and psaJ transcripts. Required for the stabilization of bicistronic rpl16 and rpl14 mRNAs. This Zea mays (Maize) protein is Pentatricopeptide repeat-containing protein ATP4, chloroplastic.